The chain runs to 367 residues: CCN family member 4 (367 aa).

The signal sequence occupies residues 1 to 22 (MRWLLPWTLAAVAVLMVGNILA). Positions 45–118 (RPEFCKWPCE…RYAIGVCAQV (74 aa)) constitute an IGFBP N-terminal domain. 4 disulfides stabilise this stretch: Cys49/Cys73, Cys53/Cys75, Cys55/Cys76, and Cys62/Cys79. N-linked (GlcNAc...) asparagine glycosylation occurs at Asn86. Cystine bridges form between Cys87-Cys101 and Cys93-Cys115. A VWFC domain is found at 121 to 186 (VGCVLDGVRY…GQCCEQWVCD (66 aa)). A glycan (N-linked (GlcNAc...) asparagine) is linked at Asn143. The 46-residue stretch at 215-260 (NCIAYTSPWSPCSTTCGLGISTRISNVNARCWPEQESRLCNLRPCD) folds into the TSP type-1 domain. Cystine bridges form between Cys273-Cys310, Cys290-Cys324, Cys301-Cys340, Cys304-Cys342, and Cys309-Cys346. The CTCK domain occupies 273–347 (CLAVYQPEEA…NACFCNLSCR (75 aa)). N-linked (GlcNAc...) asparagine glycosylation is present at Asn284. N-linked (GlcNAc...) asparagine glycosylation occurs at Asn343.

The protein belongs to the CCN family.

It localises to the secreted. Its function is as follows. Downstream regulator in the Wnt/Frizzled-signaling pathway. Associated with cell survival. Adheres to skin and melanoma fibroblasts. In vitro binding to skin fibroblasts occurs through the proteoglycans, decorin and biglycan. This is CCN family member 4 (Ccn4) from Rattus norvegicus (Rat).